A 66-amino-acid chain; its full sequence is EACEELRFGGQAQVPTLVDSVYQQFLAPGAARWINIDSRTMEWTLEGLRQPHRYVLDAAQLHIYML.

The region spanning Glu1–Leu66 is the RGS domain.

In terms of assembly, heterodimer with Gbeta5. Interacts with RGS7BP, leading to regulate the subcellular location of the heterodimer formed with Gbeta5.

Inhibits signal transduction by increasing the GTPase activity of G protein alpha subunits thereby driving them into their inactive GDP-bound form. The sequence is that of Regulator of G-protein signaling 11 (Rgs11) from Rattus norvegicus (Rat).